Consider the following 308-residue polypeptide: Homoserine kinase (308 aa).

An ATP-binding site is contributed by 94–104; that stretch reads PLARGLGSSAT.

It belongs to the GHMP kinase family. Homoserine kinase subfamily.

The protein resides in the cytoplasm. It carries out the reaction L-homoserine + ATP = O-phospho-L-homoserine + ADP + H(+). It functions in the pathway amino-acid biosynthesis; L-threonine biosynthesis; L-threonine from L-aspartate: step 4/5. Catalyzes the ATP-dependent phosphorylation of L-homoserine to L-homoserine phosphate. The sequence is that of Homoserine kinase from Crocosphaera subtropica (strain ATCC 51142 / BH68) (Cyanothece sp. (strain ATCC 51142)).